We begin with the raw amino-acid sequence, 235 residues long: V-type proton ATPase subunit E2 (235 aa).

An N-acetylmethionine modification is found at M1. Residues K8 to I64 are a coiled coil.

This sequence belongs to the V-ATPase E subunit family. V-ATPase is a heteromultimeric enzyme composed of a peripheral catalytic V1 complex (components A to H) attached to an integral membrane V0 proton pore complex (components: a, c, c'', d and e).

It is found in the vacuole membrane. Its function is as follows. Subunit of the peripheral V1 complex of vacuolar ATPase essential for assembly or catalytic function. V-ATPase is responsible for acidifying a variety of intracellular compartments in eukaryotic cells. This Arabidopsis thaliana (Mouse-ear cress) protein is V-type proton ATPase subunit E2 (VHA-E2).